A 263-amino-acid chain; its full sequence is Taurine import ATP-binding protein TauB (263 aa).

An ABC transporter domain is found at Leu4–Ser235. Residue Gly40 to Ser47 participates in ATP binding.

This sequence belongs to the ABC transporter superfamily. Taurine importer (TC 3.A.1.17.1) family. In terms of assembly, the complex is composed of two ATP-binding proteins (TauB), two transmembrane proteins (TauC) and a solute-binding protein (TauA).

The protein localises to the cell inner membrane. The catalysed reaction is taurine(out) + ATP + H2O = taurine(in) + ADP + phosphate + H(+). Functionally, part of the ABC transporter complex TauABC involved in taurine import. Responsible for energy coupling to the transport system. The polypeptide is Taurine import ATP-binding protein TauB (Pseudomonas aeruginosa (strain UCBPP-PA14)).